A 65-amino-acid polypeptide reads, in one-letter code: Toxin AaHIT4 (65 aa).

The LCN-type CS-alpha/beta domain maps to 1-64 (EHGYLLNKYT…LWNYKTNKCD (64 aa)). 4 disulfide bridges follow: cysteine 12–cysteine 63, cysteine 16–cysteine 38, cysteine 23–cysteine 45, and cysteine 27–cysteine 47.

Belongs to the long (4 C-C) scorpion toxin superfamily. Sodium channel inhibitor family. As to expression, expressed by the venom gland.

It localises to the secreted. In terms of biological role, has a toxic effect on insects and mammals and is capable of competing with anti-insect scorpion toxins for binding to the sodium channel (Nav) of insects. It also modulates the binding of alpha-type and beta-type anti-mammal scorpion toxins to the mammal sodium channel. It may act on both site 3 and site 4 of voltage-gated sodium channels. This chain is Toxin AaHIT4, found in Androctonus australis (Sahara scorpion).